A 103-amino-acid polypeptide reads, in one-letter code: Neuraminidase (103 aa).

Residues G1–S18 traverse the membrane as a helical; Signal-anchor for type II membrane protein segment. Over H19 to P103 the chain is Virion surface. N-linked (GlcNAc...) asparagine; by host glycans are attached at residues N27, N41, N46, N51, and N71. Position 101 (R101) interacts with substrate.

This sequence belongs to the glycosyl hydrolase 34 family. In terms of assembly, homotetramer. Requires Ca(2+) as cofactor. N-glycosylated.

The protein resides in the virion membrane. Its subcellular location is the host apical cell membrane. The enzyme catalyses Hydrolysis of alpha-(2-&gt;3)-, alpha-(2-&gt;6)-, alpha-(2-&gt;8)- glycosidic linkages of terminal sialic acid residues in oligosaccharides, glycoproteins, glycolipids, colominic acid and synthetic substrates.. With respect to regulation, inhibited by the neuraminidase inhibitors zanamivir (Relenza) and oseltamivir (Tamiflu). These drugs interfere with the release of progeny virus from infected cells and are effective against all influenza strains. Resistance to neuraminidase inhibitors is quite rare. In terms of biological role, catalyzes the removal of terminal sialic acid residues from viral and cellular glycoconjugates. Cleaves off the terminal sialic acids on the glycosylated HA during virus budding to facilitate virus release. Additionally helps virus spread through the circulation by further removing sialic acids from the cell surface. These cleavages prevent self-aggregation and ensure the efficient spread of the progeny virus from cell to cell. Otherwise, infection would be limited to one round of replication. Described as a receptor-destroying enzyme because it cleaves a terminal sialic acid from the cellular receptors. May facilitate viral invasion of the upper airways by cleaving the sialic acid moieties on the mucin of the airway epithelial cells. Likely to plays a role in the budding process through its association with lipid rafts during intracellular transport. May additionally display a raft-association independent effect on budding. Plays a role in the determination of host range restriction on replication and virulence. Sialidase activity in late endosome/lysosome traffic seems to enhance virus replication. This chain is Neuraminidase (NA), found in Influenza A virus (strain A/Camel/Mongolia/1982 H1N1).